A 271-amino-acid chain; its full sequence is N-acetyltransferase ECO1 (271 aa).

The CCHH-type zinc-finger motif lies at 26 to 50 (VKCPKCSITYSTNSPSDLVQHKRYH). The N-acetyltransferase domain maps to 109–271 (VMISPKKANE…SGKLLIPCYI (163 aa)).

The protein belongs to the acetyltransferase family. ECO subfamily.

Its subcellular location is the nucleus. In terms of biological role, probable acetyltransferase required for the establishment of sister chromatid cohesion and couple the processes of cohesion and DNA replication to ensure that only sister chromatids become paired together. In contrast to the structural cohesins, the deposition and establishment factors are required only during S phase. Acts by acetylating the cohesin complex component SMC3. The protein is N-acetyltransferase ECO1 (ECO1) of Kluyveromyces lactis (strain ATCC 8585 / CBS 2359 / DSM 70799 / NBRC 1267 / NRRL Y-1140 / WM37) (Yeast).